We begin with the raw amino-acid sequence, 438 residues long: GTPase Der (438 aa).

EngA-type G domains lie at 2 to 164 (HKVA…PEDD) and 173 to 343 (IRIS…EKWQ). Residues 8–15 (GRPNVGKS), 55–59 (DTGGL), 116–119 (NKID), 179–186 (GRPNVGKS), 226–230 (DTAGI), and 288–291 (NKWD) each bind GTP. One can recognise a KH-like domain in the interval 344–428 (SRIGTSELNR…PVRLKWKEKG (85 aa)).

Belongs to the TRAFAC class TrmE-Era-EngA-EngB-Septin-like GTPase superfamily. EngA (Der) GTPase family. Associates with the 50S ribosomal subunit.

Functionally, GTPase that plays an essential role in the late steps of ribosome biogenesis. The polypeptide is GTPase Der (Deinococcus radiodurans (strain ATCC 13939 / DSM 20539 / JCM 16871 / CCUG 27074 / LMG 4051 / NBRC 15346 / NCIMB 9279 / VKM B-1422 / R1)).